Consider the following 128-residue polypeptide: uncharacterized protein (128 aa).

Residues 8–28 (YQAIYLIFAGFTVFGLLLHFY) form a helical membrane-spanning segment.

It localises to the membrane. This is an uncharacterized protein from Haemophilus influenzae (strain ATCC 51907 / DSM 11121 / KW20 / Rd).